The following is a 271-amino-acid chain: MSSKAVAHPNIAVWIMALGIAFSMALVLTAVFNANPWEDHTYDLAPPIVAGMPAPHRDGREKMVCSSCHIVTPPAIGTGPGSGTLPIVQGTPAPHVDGREKMPCASCHTIVKKGSVAKGAKAAPLPAAVTPGMPLPEAVSVALAVAPAPAAVPLGNEAHERMVPFRYQGKVVSIAGAGARSVWGDIYIQINDGINPPIWIDLAPRWYLQAEGCVVRPGMFVKGTAFRDPTQAAAGLDYAMSVMANGEICALRDNHLNGLWANAGGMDAEER.

The Cytoplasmic portion of the chain corresponds to 1-10; that stretch reads MSSKAVAHPN. The helical transmembrane segment at 11–31 threads the bilayer; the sequence is IAVWIMALGIAFSMALVLTAV. At 32 to 271 the chain is on the lumenal side; it reads FNANPWEDHT…NAGGMDAEER (240 aa). Residues 48–71 carry the MCR (magnetochrome) 1 motif; it reads IVAGMPAPHRDGREKMVCSSCHIV. Heme contacts are provided by C65, C68, H69, C104, C107, and H108. The MCR 2 signature appears at 87-110; the sequence is IVQGTPAPHVDGREKMPCASCHTI.

This sequence belongs to the magnetosome MamX family. It depends on heme as a cofactor.

The protein resides in the magnetosome membrane. In terms of biological role, required for correct biomineralization of the magnetosome, may be involved in redox control of biomineralization. May function with MamY, MamZ amd Mms6. The chain is Magnetosome protein MamX (mamX) from Paramagnetospirillum magneticum (strain ATCC 700264 / AMB-1) (Magnetospirillum magneticum).